We begin with the raw amino-acid sequence, 358 residues long: uncharacterized protein (358 aa).

The segment at 1 to 47 is disordered; that stretch reads MGNVAGETRANVIPLHTNRSRVAARRRAGQRAESRQHPSLLSDPNDR. Residues 18–29 show a composition bias toward basic residues; it reads NRSRVAARRRAG.

To M.leprae ML2427.

This is an uncharacterized protein from Mycobacterium tuberculosis (strain CDC 1551 / Oshkosh).